We begin with the raw amino-acid sequence, 937 residues long: Protocadherin alpha-7 (937 aa).

The N-terminal stretch at 1 to 29 is a signal peptide; the sequence is MVCPNGYDPGGRHLLLFIIILAAWEAGRG. Cadherin domains follow at residues 30–133, 134–242, 243–350, 351–455, 456–565, and 581–678; these read QLHY…PPVF, PATQ…APVF, DRTL…APQL, TLTS…APAF, AQPE…APAL, and VPRS…APKA. The Extracellular segment spans residues 30 to 697; the sequence is QLHYSVPEEA…GPETELVDVN (668 aa). Cysteine 96 and cysteine 102 are disulfide-bonded. Asparagine 254 and asparagine 265 each carry an N-linked (GlcNAc...) asparagine glycan. Asparagine 548 is a glycosylation site (N-linked (GlcNAc...) asparagine). Residues 698–718 form a helical membrane-spanning segment; that stretch reads VYLIIAICAVSSLLVLTLLLY. The Cytoplasmic portion of the chain corresponds to 719–937; the sequence is TALRCSAPSS…GNSTTDNSDQ (219 aa). Disordered regions lie at residues 755–795 and 814–937; these read RQRV…DWRY and ILRA…NSDQ. 5 PXXP repeats span residues 774–777, 786–789, 819–822, 860–863, and 878–881; these read PSLP, PRQP, PGGP, PGNP, and PGSP. Residues 774 to 881 are 5 X 4 AA repeats of P-X-X-P; sequence PSLPQGPSST…PDKFIIPGSP (108 aa). The segment covering 775–787 has biased composition (polar residues); it reads SLPQGPSSTDNPR. Positions 896 to 910 are enriched in basic and acidic residues; that stretch reads DKSDFITFGKKEETK.

Forms homodimers in trans (molecules expressed by two different cells). Forms promiscuous heterodimers in cis (at the plasma membrane of the same cell) with other protocadherins.

It is found in the cell membrane. Its function is as follows. Calcium-dependent cell-adhesion protein involved in cells self-recognition and non-self discrimination. Thereby, it is involved in the establishment and maintenance of specific neuronal connections in the brain. The chain is Protocadherin alpha-7 from Homo sapiens (Human).